A 277-amino-acid chain; its full sequence is Urease accessory protein UreD (277 aa).

It belongs to the UreD family. As to quaternary structure, ureD, UreF and UreG form a complex that acts as a GTP-hydrolysis-dependent molecular chaperone, activating the urease apoprotein by helping to assemble the nickel containing metallocenter of UreC. The UreE protein probably delivers the nickel.

It is found in the cytoplasm. Required for maturation of urease via the functional incorporation of the urease nickel metallocenter. The protein is Urease accessory protein UreD of Pseudomonas putida (strain W619).